A 666-amino-acid chain; its full sequence is Tripartite terminase subunit 3 (666 aa).

Positions 208-215 match the Walker A motif motif; the sequence is VPRRHGKT. The Walker B motif motif lies at 300-305; the sequence is LLIVDE. The For ATPase activity role is filled by glutamate 305. Catalysis depends on for nuclease activity residues aspartate 458, glutamate 529, and aspartate 643.

This sequence belongs to the herpesviridae TRM3 protein family. In terms of assembly, interacts with the terminase subunits TRM1 and TRM2. Interacts with portal protein.

The protein localises to the host nucleus. In terms of biological role, component of the molecular motor that translocates viral genomic DNA in empty capsid during DNA packaging. Forms a tripartite terminase complex together with TRM1 and TRM2 in the host cytoplasm. Once the complex reaches the host nucleus, it interacts with the capsid portal vertex. This portal forms a ring in which genomic DNA is translocated into the capsid. TRM3 carries an RNase H-like nuclease activity that plays an important role for the cleavage of concatemeric viral DNA into unit length genomes. This chain is Tripartite terminase subunit 3, found in Homo sapiens (Human).